The following is a 390-amino-acid chain: Cystathionine beta-lyase MetC (390 aa).

Lys-200 carries the N6-(pyridoxal phosphate)lysine modification.

The protein belongs to the trans-sulfuration enzymes family. As to quaternary structure, homotetramer. Pyridoxal 5'-phosphate serves as cofactor.

It is found in the cytoplasm. The catalysed reaction is L,L-cystathionine + H2O = L-homocysteine + pyruvate + NH4(+). It catalyses the reaction an S-substituted L-cysteine + H2O = a thiol + pyruvate + NH4(+). It functions in the pathway amino-acid biosynthesis; L-methionine biosynthesis via de novo pathway; L-homocysteine from L-cystathionine: step 1/1. Functionally, catalyzes the transformation of cystathionine into homocysteine. Also exhibits cysteine desulfhydrase activity in vitro, producing sulfide from cysteine. The chain is Cystathionine beta-lyase MetC (metC) from Bacillus subtilis (strain 168).